The sequence spans 347 residues: MNPLILLLITLTVILGTLIVMMSSHWLMIWMGFEMNMLAVIPLLMKQYNPRSMEAATKYFLTQATASMLLMLAIIINLMYSGQWTFTKFMDPTASIIMTLALMMKLGLAPFHFWVPEVTQGISLTSGLILLTWQKLAPLSILYTITPVINPDLLLMASMLSIAIGGWGGLNQTQLRKILAYSSIAHMGWMMSVLAFNPTMTLLNLFMYILMTSTTFMLFMVASTTTTLSLSLTWNKTPLITTSILIMMLSLGGLPPLAGFLPKWMIIQELTKSNNIILATLMAITALLNLFFYIRLTYATSLTMFPTTNNMKIKWQFKTTKQMNYLPPLIIMSTLTLPLAPAMILLN.

The next 11 membrane-spanning stretches (helical) occupy residues 3 to 23 (PLILLLITLTVILGTLIVMMS), 25 to 45 (HWLMIWMGFEMNMLAVIPLLM), 59 to 79 (YFLTQATASMLLMLAIIINLM), 96 to 116 (IIMTLALMMKLGLAPFHFWVP), 122 to 142 (ISLTSGLILLTWQKLAPLSIL), 148 to 168 (VINPDLLLMASMLSIAIGGWG), 178 to 198 (ILAYSSIAHMGWMMSVLAFNP), 202 to 222 (LLNLFMYILMTSTTFMLFMVA), 240 to 260 (ITTSILIMMLSLGGLPPLAGF), 276 to 296 (IILATLMAITALLNLFFYIRL), and 326 to 346 (LPPLIIMSTLTLPLAPAMILL).

This sequence belongs to the complex I subunit 2 family. In terms of assembly, core subunit of respiratory chain NADH dehydrogenase (Complex I) which is composed of 45 different subunits. Interacts with TMEM242.

The protein localises to the mitochondrion inner membrane. The enzyme catalyses a ubiquinone + NADH + 5 H(+)(in) = a ubiquinol + NAD(+) + 4 H(+)(out). Functionally, core subunit of the mitochondrial membrane respiratory chain NADH dehydrogenase (Complex I) which catalyzes electron transfer from NADH through the respiratory chain, using ubiquinone as an electron acceptor. Essential for the catalytic activity and assembly of complex I. In Peropteryx kappleri (Greater dog-like bat), this protein is NADH-ubiquinone oxidoreductase chain 2.